A 244-amino-acid polypeptide reads, in one-letter code: 5-oxoprolinase subunit A (244 aa).

The protein belongs to the LamB/PxpA family. As to quaternary structure, forms a complex composed of PxpA, PxpB and PxpC.

The catalysed reaction is 5-oxo-L-proline + ATP + 2 H2O = L-glutamate + ADP + phosphate + H(+). Catalyzes the cleavage of 5-oxoproline to form L-glutamate coupled to the hydrolysis of ATP to ADP and inorganic phosphate. This chain is 5-oxoprolinase subunit A, found in Shigella dysenteriae serotype 1 (strain Sd197).